Consider the following 230-residue polypeptide: Sugar fermentation stimulation protein homolog (230 aa).

This sequence belongs to the SfsA family.

The chain is Sugar fermentation stimulation protein homolog from Clostridium tetani (strain Massachusetts / E88).